A 695-amino-acid polypeptide reads, in one-letter code: UvrABC system protein C (695 aa).

Positions 1-10 (MNQDPAETRD) are enriched in basic and acidic residues. The disordered stretch occupies residues 1-53 (MNQDPAETRDTAAPPPADTTSPSPVSPELEPRSAPGAQDIDAASASLTVDEDD). The segment covering 18-27 (DTTSPSPVSP) has biased composition (low complexity). Residues 88–166 (TSPGVYRMLN…IKQLRPRFNV (79 aa)) form the GIY-YIG domain. A UVR domain is found at 276-311 (RAVKQELAVEMEKASNELEFETAALYRDRLAALSAI).

Belongs to the UvrC family. As to quaternary structure, interacts with UvrB in an incision complex.

The protein resides in the cytoplasm. Functionally, the UvrABC repair system catalyzes the recognition and processing of DNA lesions. UvrC both incises the 5' and 3' sides of the lesion. The N-terminal half is responsible for the 3' incision and the C-terminal half is responsible for the 5' incision. The sequence is that of UvrABC system protein C from Rhodopseudomonas palustris (strain BisB5).